The primary structure comprises 159 residues: Endoribonuclease YbeY (159 aa).

Residues H119, H123, and H129 each coordinate Zn(2+).

The protein belongs to the endoribonuclease YbeY family. Requires Zn(2+) as cofactor.

The protein resides in the cytoplasm. In terms of biological role, single strand-specific metallo-endoribonuclease involved in late-stage 70S ribosome quality control and in maturation of the 3' terminus of the 16S rRNA. The polypeptide is Endoribonuclease YbeY (Acinetobacter baylyi (strain ATCC 33305 / BD413 / ADP1)).